Reading from the N-terminus, the 359-residue chain is Mitochondrial glutathione transporter SLC25A39 (359 aa).

Over 1–14 (MDDQDPGGISPLQQ) the chain is Mitochondrial intermembrane. Solcar repeat units follow at residues 9–151 (ISPL…LKAF), 159–243 (SDLY…VKSW), and 253–347 (TSVG…GKSF). A helical transmembrane segment spans residues 15–35 (MVASGAGAVVTSLFMTPLDVV). Residues 36 to 121 (KVRLQSQRPS…VKIVRHEGTR (86 aa)) lie on the Mitochondrial matrix side of the membrane. Residues C74, C78, C88, and C94 each contribute to the [2Fe-2S] cluster site. A helical membrane pass occupies residues 122–142 (TLWSGLPATLVMTVPATAIYF). At 143-164 (TAYDQLKAFLCGQSLTSDLYAP) the chain is on the mitochondrial intermembrane side. A helical membrane pass occupies residues 165–185 (MVAGALARMGTVTVVSPLELV). At 186 to 214 (RTKLQAQHVSYRELASSVQAAVTQGGWRS) the chain is on the mitochondrial matrix side. Residues 215–235 (LWLGWGPTALRDVPFSALYWF) traverse the membrane as a helical segment. The Mitochondrial intermembrane segment spans residues 236–255 (NYELVKSWLSGLRPKDQTSV). A helical transmembrane segment spans residues 256 to 276 (GISFVAGGISGMVAATLTLPF). At 277–317 (DVVKTQRQMSLGAVEAVRVKPPRVDSTWLLLRRIRAESGTR) the chain is on the mitochondrial matrix side. Residues 318-338 (GLFAGFLPRIIKAAPSCAIMI) traverse the membrane as a helical segment. Residues 339–359 (STYEFGKSFFQRLNQEQPLGR) lie on the Mitochondrial intermembrane side of the membrane.

This sequence belongs to the mitochondrial carrier (TC 2.A.29) family. Post-translationally, cleaved and degraded by AFG3L2; degradation by AFG3L2 is regulated by the ability of SLC25A39 to bind iron-sulfur. In absence of mitochondrial glutathione, SLC25A39 binds iron-sulfur, preventing cleavage and degradation by AFG3L2. The presence of mitochondrial glutathione prevents iron-sulfur-binding to SLC25A39, promoting cleavage and degradation by AFG3L2. As to expression, abundant expression in bone marrow, spleen, testis and kidney.

The protein localises to the mitochondrion inner membrane. It carries out the reaction glutathione(in) = glutathione(out). Its activity is regulated as follows. The activity of SLC25A39 is regulated by levels of mitochondrial glutathione via its ability to bind [2Fe-2S] iron-sulfur cluster. Upon physiological levels of mitochondrial glutathione, glutathione prevents iron-sulfur-binding to SLC25A39 promoting cleavage and degradation by AFG3L2. Upon depletion of mitochondrial glutathione, SLC25A39 binds iron-sulfur, preventing cleavage and degradation by AFG3L2. In terms of biological role, mitochondrial transporter required for glutathione import into mitochondria. Glutathione, which plays key roles in oxidative metabolism, is produced exclusively in the cytosol and is imported in many organelles. Mitochondrial glutathione is required for the activity and stability of proteins containing iron-sulfur clusters, as well as erythropoiesis. The sequence is that of Mitochondrial glutathione transporter SLC25A39 from Mus musculus (Mouse).